The sequence spans 429 residues: Chaperone SurA (429 aa).

Positions 1-19 (MKKTLLALLIASVMQSALA) are cleaved as a signal peptide. 2 consecutive PpiC domains span residues 172–273 (RTEY…KLVD) and 283–381 (VEQY…LVEG).

It is found in the periplasm. The catalysed reaction is [protein]-peptidylproline (omega=180) = [protein]-peptidylproline (omega=0). Chaperone involved in the correct folding and assembly of outer membrane proteins. Recognizes specific patterns of aromatic residues and the orientation of their side chains, which are found more frequently in integral outer membrane proteins. May act in both early periplasmic and late outer membrane-associated steps of protein maturation. The chain is Chaperone SurA from Chromobacterium violaceum (strain ATCC 12472 / DSM 30191 / JCM 1249 / CCUG 213 / NBRC 12614 / NCIMB 9131 / NCTC 9757 / MK).